We begin with the raw amino-acid sequence, 882 residues long: MTELSPKYNPAEVEAGRYQKWLDADVFKPSGDQKAKPYSIVIPPPNVTGKLHLGHAWDTTLQDIIIRQKRMQGFDTLWLPGMDHAGIATQAKVEERLREQGISRYDLGRDKFLDKVWEWKDEYATTIKEQWGKMGLSVDYSRERFTLDEGLSKAVRKVFVDLYKKGWIYRGEFIINWDPAARTALSDIEVIHKDVEGAFYHMNYMLEDGSRALQVATTRPETMFGDVAVAVNPEDPRYKDLIGKNVILPIVNKLIPIVGDEHADPEFGTGVVKITPAHDPNDFEVGQRHNLPQVNVMNDDGTMNELAGDFAGMDRFEARQATVAKLEELGALVNIEKRVHSVGHSERSGAVVEPRLSTQWFVKMDELAKQAMDNQETDDRVDFYPPRFNDTFLQWMENVHDWVISRQLWWGHQIPAWYNAEGEIYVGEEAPEGDDWTQDEDVLDTWFSSALWPFSTMGWPDTDVEDFKRYFPTSTLVTGYDIIFFWVSRMIFQSLEFTGRQPFQNVLIHGLIRDEEGRKMSKSLGNGIDPMDVIEKYGADSLRWFLSNGSAPGQDVRFSYEKMDASWNFINKIWNISRYILMNNEGLTLEDAESNVAKVAASEAGNVTDQWILHNLNETIAKVTENFDKFEFGVAGHILYNFIWEEFANWYVELTKEVLYSDNEAEKVITRSVLLYTLDKILRLLHPIMPFVTEEIYAQYAQGSIVTVDYPVVRPAFENEAAHKGVESLKDLIRAVRNARAEVNVAPSKPITILVKTADSELEDFFNSNINYIKCFTNPEKLEISSAIAAPELAMTSIITGAEIYLPLADLLNVEEELARLDKELAKWQKELDMVGKKLGNERFVANAKPEVVQKEKDKQADYQAKYDATQERIAEMKKIKS.

A 'HIGH' region motif is present at residues 45–55; that stretch reads PNVTGKLHLGH. Residues 519–523 carry the 'KMSKS' region motif; sequence KMSKS. Lys522 lines the ATP pocket. The stretch at 808-882 forms a coiled coil; sequence LADLLNVEEE…RIAEMKKIKS (75 aa).

This sequence belongs to the class-I aminoacyl-tRNA synthetase family. ValS type 1 subfamily. Monomer.

Its subcellular location is the cytoplasm. The enzyme catalyses tRNA(Val) + L-valine + ATP = L-valyl-tRNA(Val) + AMP + diphosphate. Its function is as follows. Catalyzes the attachment of valine to tRNA(Val). As ValRS can inadvertently accommodate and process structurally similar amino acids such as threonine, to avoid such errors, it has a 'posttransfer' editing activity that hydrolyzes mischarged Thr-tRNA(Val) in a tRNA-dependent manner. The protein is Valine--tRNA ligase of Streptococcus pyogenes serotype M1.